A 460-amino-acid chain; its full sequence is Centrosomal protein CEP57L1 (460 aa).

Serine 49 is modified (phosphoserine). Coiled coils occupy residues asparagine 51–lysine 228 and isoleucine 317–histidine 384. The span at lysine 399 to aspartate 410 shows a compositional bias: polar residues. The tract at residues lysine 399–proline 423 is disordered.

This sequence belongs to the translokin family.

The protein resides in the cytoplasm. The protein localises to the cytoskeleton. Its subcellular location is the microtubule organizing center. It is found in the centrosome. Functionally, centrosomal protein which may be required for microtubule attachment to centrosomes. This Homo sapiens (Human) protein is Centrosomal protein CEP57L1 (CEP57L1).